The following is a 259-amino-acid chain: UPF0246 protein PSHAa2558 (259 aa).

Belongs to the UPF0246 family.

The protein is UPF0246 protein PSHAa2558 of Pseudoalteromonas translucida (strain TAC 125).